A 111-amino-acid chain; its full sequence is Nucleoid-associated protein Fphi_0115 (111 aa).

Positions 1-27 (MNFDMSKLMQQAQKMQEQMKKAQQERE) are disordered. The span at 17 to 27 (EQMKKAQQERE) shows a compositional bias: basic and acidic residues.

It belongs to the YbaB/EbfC family. As to quaternary structure, homodimer.

The protein resides in the cytoplasm. Its subcellular location is the nucleoid. In terms of biological role, binds to DNA and alters its conformation. May be involved in regulation of gene expression, nucleoid organization and DNA protection. In Francisella philomiragia subsp. philomiragia (strain ATCC 25017 / CCUG 19701 / FSC 153 / O#319-036), this protein is Nucleoid-associated protein Fphi_0115.